A 787-amino-acid chain; its full sequence is MLEDTSFAIQPEQDDKTQETHRIDIGNMHTFSHTEHVFSFHCDTGIVKIRFYREDIVRIAFNPFGETSLSTSVAVVKEPEKVDASVHETEEEVTLTSAKQTVVLQKRPFRVRIYDNHGRLLVAEGKKGMAFTYQGEVCCFKMMDEADHFYGFGEKTGFLDKRGETMTMWNTDVYAPHNPETDPLYQSHPYFMTVRNGSAHGIFFDNTYKTTFDFQTATDEYCFSAEGGAIDYYVFAGPTPKDVLEQYTDLTGRMPLPPKWALGYHQSRYSYETEQEVREIAQTFIEKDIPLDVIYLDIHYMNGYRVFTFDRNRFPNLKQLIADLKQKGIRVVPIVDPGVKEDPEYVIYQEGIRHDYFCKYIEGNVYFGEVWPGKSAFPDFTNKKVRKWWGEKHQFYTDLGIEGIWNDMNEPSVFNETKTMDVKVIHDNDGDPKTHRELHNVYGFMMGEATYKGMKKLLNGKRPFLLTRAGFSGIQRYAAVWTGDNRSFWEHLQMSLPMCMNLGLSGVAFCGPDVGGFAHNTNGELLTRWMQVGAFTPYFRNHCAIGFRRQEPWAFGEKYERIIKKYIRLRYQWLPHLYTLFAEAHETGAPVMRPLFFEYPDDENTYNLYDEFLVGANVLIAPIMTPSTTRRVAYFPKGNWVDYWTGEVLEGGQYHLISADLETLPIFIKQGSAIALGDVKRSTEMPDEHRTVHIYKANGGKATYVLYDDDGQTFSYEKGDYLRMYIEVEYGENSVHIVTKSEGTYQPSWKLSFAIHHATEQTKVTIDGNEQNAIFDPHQRILLIQSE.

Active-site residues include D407 and E410. D484 functions as the Proton donor in the catalytic mechanism.

This sequence belongs to the glycosyl hydrolase 31 family. In terms of assembly, homohexamer.

It carries out the reaction Hydrolysis of terminal, non-reducing (1-&gt;4)-linked alpha-D-glucose residues with release of alpha-D-glucose.. In Bacillus thermoamyloliquefaciens, this protein is Alpha-glucosidase 2.